The sequence spans 282 residues: 4-diphosphocytidyl-2-C-methyl-D-erythritol kinase (282 aa).

The active site involves Lys-15. 98 to 108 (PMGGGVGGGSS) contributes to the ATP binding site. Residue Asp-140 is part of the active site.

The protein belongs to the GHMP kinase family. IspE subfamily.

It catalyses the reaction 4-CDP-2-C-methyl-D-erythritol + ATP = 4-CDP-2-C-methyl-D-erythritol 2-phosphate + ADP + H(+). The protein operates within isoprenoid biosynthesis; isopentenyl diphosphate biosynthesis via DXP pathway; isopentenyl diphosphate from 1-deoxy-D-xylulose 5-phosphate: step 3/6. In terms of biological role, catalyzes the phosphorylation of the position 2 hydroxy group of 4-diphosphocytidyl-2C-methyl-D-erythritol. The polypeptide is 4-diphosphocytidyl-2-C-methyl-D-erythritol kinase (Azoarcus sp. (strain BH72)).